The chain runs to 249 residues: Type III pantothenate kinase (249 aa).

6–13 contributes to the ATP binding site; the sequence is DIGNSRTK. Residues tyrosine 89 and 96–99 each bind substrate; that span reads GIDR. Aspartate 98 functions as the Proton acceptor in the catalytic mechanism. A K(+)-binding site is contributed by aspartate 119. Position 122 (threonine 122) interacts with ATP. Threonine 174 is a substrate binding site.

Belongs to the type III pantothenate kinase family. As to quaternary structure, homodimer. It depends on NH4(+) as a cofactor. The cofactor is K(+).

The protein resides in the cytoplasm. The catalysed reaction is (R)-pantothenate + ATP = (R)-4'-phosphopantothenate + ADP + H(+). Its pathway is cofactor biosynthesis; coenzyme A biosynthesis; CoA from (R)-pantothenate: step 1/5. In terms of biological role, catalyzes the phosphorylation of pantothenate (Pan), the first step in CoA biosynthesis. The protein is Type III pantothenate kinase of Colwellia psychrerythraea (strain 34H / ATCC BAA-681) (Vibrio psychroerythus).